The sequence spans 652 residues: Bifunctional protein ThiO/ThiG (652 aa).

Residues Met-1–Ser-366 are thiO. FAD is bound by residues Ile-5–Val-19 and Ala-44–Met-46. Glu-52 contributes to the glycine binding site. Val-173 contacts FAD. Glycine-binding residues include Arg-301 and Arg-327. His-325–Leu-331 provides a ligand contact to FAD. Positions Ser-393 to Ser-652 are thiG. The active-site Schiff-base intermediate with DXP is the Lys-494. Residues Gly-555, Ala-581 to Gly-582, and Asn-603 to Ser-604 each bind 1-deoxy-D-xylulose 5-phosphate.

This sequence in the N-terminal section; belongs to the DAO family. ThiO subfamily. It in the C-terminal section; belongs to the ThiG family. Interacts with ThiH and ThiS. It depends on FAD as a cofactor.

The protein localises to the cytoplasm. The catalysed reaction is glycine + O2 + H2O = glyoxylate + H2O2 + NH4(+). It carries out the reaction [ThiS sulfur-carrier protein]-C-terminal-Gly-aminoethanethioate + 2-iminoacetate + 1-deoxy-D-xylulose 5-phosphate = [ThiS sulfur-carrier protein]-C-terminal Gly-Gly + 2-[(2R,5Z)-2-carboxy-4-methylthiazol-5(2H)-ylidene]ethyl phosphate + 2 H2O + H(+). Its pathway is cofactor biosynthesis; thiamine diphosphate biosynthesis. In terms of biological role, catalyzes the FAD-dependent oxidative deamination of glycine. Is essential for thiamine biosynthesis since the oxidation of glycine catalyzed by ThiO generates the glycine imine intermediate (dehydroglycine) required for the biosynthesis of the thiazole ring of thiamine pyrophosphate. Catalyzes the rearrangement of 1-deoxy-D-xylulose 5-phosphate (DXP) to produce the thiazole phosphate moiety of thiamine. Sulfur is provided by the thiocarboxylate moiety of the carrier protein ThiS. In vitro, sulfur can be provided by H(2)S. The sequence is that of Bifunctional protein ThiO/ThiG (thiO/thiG) from Trichormus variabilis (strain ATCC 29413 / PCC 7937) (Anabaena variabilis).